The sequence spans 1218 residues: Protein dispatched (1218 aa).

Residues 21 to 41 (YLVVVSIAVYCVACIIVALVL) form a helical membrane-spanning segment. Residues 99-135 (VETKLHPNHRRRKNKHKNRNKNKRRKEQNQSSHEHHD) are disordered. Basic residues predominate over residues 104-124 (HPNHRRRKNKHKNRNKNKRRK). N-linked (GlcNAc...) asparagine glycans are attached at residues Asn127, Asn176, Asn197, Asn264, Asn319, and Asn388. The SSD domain occupies 430-624 (AMDLGLENEL…ITWLPASVSI (195 aa)). 6 helical membrane passes run 443-463 (LLLT…ASVW), 473-493 (LMSC…YAIV), 504-524 (LLAV…FLKI), 570-590 (AAAS…ASYS), 598-618 (CFGI…ITWL), and 670-690 (AYLW…IVFW). N-linked (GlcNAc...) asparagine glycosylation is found at Asn767, Asn883, and Asn891. The next 5 membrane-spanning stretches (helical) occupy residues 975 to 995 (LAVL…VLTV), 996 to 1016 (SLSI…LNIL), 1019 to 1039 (IAVS…GIHY), 1058 to 1078 (IIGP…IMMA), and 1087 to 1107 (IGVF…FFLM).

Belongs to the dispatched family.

The protein localises to the membrane. Segment polarity protein which functions in hedgehog (Hh) signaling. Regulates the trafficking and the release of cholesterol-modified hedgehog protein from cells of the posterior compartment (P cells) and is hence required for the effective production of the Hh signal. This is Protein dispatched (disp) from Drosophila melanogaster (Fruit fly).